The chain runs to 579 residues: MKDTIRQLIQQALTRLTDDGVLPAGLTPAIQVENTKDKSHGDFASNIAMMLAKPAGLKPRQLAEKLVAALPADASVSKVEIAGPGFLNFFQNSDALARRLEVALADERLGVRKHGDLQRVVVDLSSPNLAKEMHVGHLRSTIIGDAVARVLEFLGDVVIRQNHVGDWGTQFGMLLAHLEEKPASAESELADLEQFYRAAKKRFDESEAFADRARELVVRLQAGEPECLRLWQRFNAISLSHCQEVYERLGVRLTPDDIRGESAYNDELPGIVQALRDKGLLTESEGAQCVFLDEFRNAEGNPLPVIVQKAGGGYLYATTDLASMRYRSQVLKADRVLYFVDQRQALHFQMTFAVARRAGFVRDDTALEHMGFGTMNGADGRPFKTRDGGTVKLIDLLDEAEQRAYALVKGKNPELPEEELRHIARAVGIGAVKYADLSKHRTSDYSFNFELMLSFEGNTAPYLLYAYTRVASVFRKLGREIDEIDGSPAPEAGQELALAARLAQFGEVLGNVAEKGLPHLLCAYLYDLAGLFSSFYENCPILTADTPARQQSRLLLAALTGRTLRQGLELLGLEPLERM.

Residues 127-137 (PNLAKEMHVGH) carry the 'HIGH' region motif.

This sequence belongs to the class-I aminoacyl-tRNA synthetase family. Monomer.

Its subcellular location is the cytoplasm. It catalyses the reaction tRNA(Arg) + L-arginine + ATP = L-arginyl-tRNA(Arg) + AMP + diphosphate. The protein is Arginine--tRNA ligase of Azotobacter vinelandii (strain DJ / ATCC BAA-1303).